A 171-amino-acid chain; its full sequence is Lipoprotein signal peptidase (171 aa).

A run of 3 helical transmembrane segments spans residues 12–32 (WYWVAVLVFFADQLSKQWVLA), 67–87 (WQRWLFTIVAVGFSTLLTVWL), and 93–113 (SLLKLNLAYTLVIGGALGNLV). Active-site residues include Asp-123 and Asp-141. Residues 137-157 (FNIADSAICIGAVLIIWDAFL) form a helical membrane-spanning segment.

It belongs to the peptidase A8 family.

Its subcellular location is the cell inner membrane. It catalyses the reaction Release of signal peptides from bacterial membrane prolipoproteins. Hydrolyzes -Xaa-Yaa-Zaa-|-(S,diacylglyceryl)Cys-, in which Xaa is hydrophobic (preferably Leu), and Yaa (Ala or Ser) and Zaa (Gly or Ala) have small, neutral side chains.. The protein operates within protein modification; lipoprotein biosynthesis (signal peptide cleavage). Its function is as follows. This protein specifically catalyzes the removal of signal peptides from prolipoproteins. This chain is Lipoprotein signal peptidase, found in Shewanella baltica (strain OS195).